The sequence spans 758 residues: DNA ligase (758 aa).

Residues 1 to 28 form a disordered region; it reads MPENFGAMRQDGLVSTSESDSPAPAATP. NAD(+)-binding positions include 60-64, 109-110, and Glu148; these read DAEFD and SL. Lys150 functions as the N6-AMP-lysine intermediate in the catalytic mechanism. Residues Arg171, Glu208, Lys324, and Lys348 each contribute to the NAD(+) site. The Zn(2+) site is built by Cys442, Cys445, Cys461, and Cys467. In terms of domain architecture, BRCT spans 660–749; the sequence is SVRRTLAGLT…PDHSAEAEEN (90 aa). The tract at residues 735 to 758 is disordered; sequence LLAHGPDHSAEAEENESEGSTTND.

This sequence belongs to the NAD-dependent DNA ligase family. LigA subfamily. It depends on Mg(2+) as a cofactor. Mn(2+) is required as a cofactor.

The enzyme catalyses NAD(+) + (deoxyribonucleotide)n-3'-hydroxyl + 5'-phospho-(deoxyribonucleotide)m = (deoxyribonucleotide)n+m + AMP + beta-nicotinamide D-nucleotide.. In terms of biological role, DNA ligase that catalyzes the formation of phosphodiester linkages between 5'-phosphoryl and 3'-hydroxyl groups in double-stranded DNA using NAD as a coenzyme and as the energy source for the reaction. It is essential for DNA replication and repair of damaged DNA. This is DNA ligase from Renibacterium salmoninarum (strain ATCC 33209 / DSM 20767 / JCM 11484 / NBRC 15589 / NCIMB 2235).